The following is a 131-amino-acid chain: Aspartate 1-decarboxylase (131 aa).

Serine 25 functions as the Schiff-base intermediate with substrate; via pyruvic acid in the catalytic mechanism. Serine 25 carries the post-translational modification Pyruvic acid (Ser). Threonine 57 is a substrate binding site. Catalysis depends on tyrosine 58, which acts as the Proton donor. 73–75 (GAA) is a binding site for substrate. Positions 112-131 (NVPTTQKSENPGQGSLRNAI) are disordered. A compositionally biased stretch (polar residues) spans 113–131 (VPTTQKSENPGQGSLRNAI).

It belongs to the PanD family. In terms of assembly, heterooctamer of four alpha and four beta subunits. It depends on pyruvate as a cofactor. In terms of processing, is synthesized initially as an inactive proenzyme, which is activated by self-cleavage at a specific serine bond to produce a beta-subunit with a hydroxyl group at its C-terminus and an alpha-subunit with a pyruvoyl group at its N-terminus.

The protein resides in the cytoplasm. It catalyses the reaction L-aspartate + H(+) = beta-alanine + CO2. Its pathway is cofactor biosynthesis; (R)-pantothenate biosynthesis; beta-alanine from L-aspartate: step 1/1. In terms of biological role, catalyzes the pyruvoyl-dependent decarboxylation of aspartate to produce beta-alanine. The sequence is that of Aspartate 1-decarboxylase from Syntrophotalea carbinolica (strain DSM 2380 / NBRC 103641 / GraBd1) (Pelobacter carbinolicus).